Consider the following 928-residue polypeptide: Isoleucine--tRNA ligase (928 aa).

The 'HIGH' region motif lies at 57-67 (PFANGNIHMGH). L-isoleucyl-5'-AMP is bound at residue E552. A 'KMSKS' region motif is present at residues 593–597 (KMSKS). K596 contributes to the ATP binding site. Residues C887, C890, C907, and C910 each coordinate Zn(2+).

It belongs to the class-I aminoacyl-tRNA synthetase family. IleS type 1 subfamily. As to quaternary structure, monomer. It depends on Zn(2+) as a cofactor.

The protein resides in the cytoplasm. The enzyme catalyses tRNA(Ile) + L-isoleucine + ATP = L-isoleucyl-tRNA(Ile) + AMP + diphosphate. Catalyzes the attachment of isoleucine to tRNA(Ile). As IleRS can inadvertently accommodate and process structurally similar amino acids such as valine, to avoid such errors it has two additional distinct tRNA(Ile)-dependent editing activities. One activity is designated as 'pretransfer' editing and involves the hydrolysis of activated Val-AMP. The other activity is designated 'posttransfer' editing and involves deacylation of mischarged Val-tRNA(Ile). This chain is Isoleucine--tRNA ligase, found in Lacticaseibacillus casei (strain BL23) (Lactobacillus casei).